We begin with the raw amino-acid sequence, 294 residues long: Phosphatidylserine decarboxylase proenzyme (294 aa).

Catalysis depends on charge relay system; for autoendoproteolytic cleavage activity residues Asp113, His169, and Ser256. Ser256 functions as the Schiff-base intermediate with substrate; via pyruvic acid; for decarboxylase activity in the catalytic mechanism. Ser256 is subject to Pyruvic acid (Ser); by autocatalysis.

This sequence belongs to the phosphatidylserine decarboxylase family. PSD-B subfamily. Prokaryotic type II sub-subfamily. Heterodimer of a large membrane-associated beta subunit and a small pyruvoyl-containing alpha subunit. The cofactor is pyruvate. Is synthesized initially as an inactive proenzyme. Formation of the active enzyme involves a self-maturation process in which the active site pyruvoyl group is generated from an internal serine residue via an autocatalytic post-translational modification. Two non-identical subunits are generated from the proenzyme in this reaction, and the pyruvate is formed at the N-terminus of the alpha chain, which is derived from the carboxyl end of the proenzyme. The autoendoproteolytic cleavage occurs by a canonical serine protease mechanism, in which the side chain hydroxyl group of the serine supplies its oxygen atom to form the C-terminus of the beta chain, while the remainder of the serine residue undergoes an oxidative deamination to produce ammonia and the pyruvoyl prosthetic group on the alpha chain. During this reaction, the Ser that is part of the protease active site of the proenzyme becomes the pyruvoyl prosthetic group, which constitutes an essential element of the active site of the mature decarboxylase.

The protein localises to the cell membrane. The enzyme catalyses a 1,2-diacyl-sn-glycero-3-phospho-L-serine + H(+) = a 1,2-diacyl-sn-glycero-3-phosphoethanolamine + CO2. It participates in phospholipid metabolism; phosphatidylethanolamine biosynthesis; phosphatidylethanolamine from CDP-diacylglycerol: step 2/2. Its function is as follows. Catalyzes the formation of phosphatidylethanolamine (PtdEtn) from phosphatidylserine (PtdSer). In Clostridium perfringens (strain SM101 / Type A), this protein is Phosphatidylserine decarboxylase proenzyme.